The chain runs to 567 residues: Proline--tRNA ligase (567 aa).

Belongs to the class-II aminoacyl-tRNA synthetase family. ProS type 1 subfamily. In terms of assembly, homodimer.

Its subcellular location is the cytoplasm. The catalysed reaction is tRNA(Pro) + L-proline + ATP = L-prolyl-tRNA(Pro) + AMP + diphosphate. Its function is as follows. Catalyzes the attachment of proline to tRNA(Pro) in a two-step reaction: proline is first activated by ATP to form Pro-AMP and then transferred to the acceptor end of tRNA(Pro). As ProRS can inadvertently accommodate and process non-cognate amino acids such as alanine and cysteine, to avoid such errors it has two additional distinct editing activities against alanine. One activity is designated as 'pretransfer' editing and involves the tRNA(Pro)-independent hydrolysis of activated Ala-AMP. The other activity is designated 'posttransfer' editing and involves deacylation of mischarged Ala-tRNA(Pro). The misacylated Cys-tRNA(Pro) is not edited by ProRS. The sequence is that of Proline--tRNA ligase from Staphylococcus aureus (strain USA300).